A 134-amino-acid chain; its full sequence is MPTINQLVRRARKDVVEKSKAPALKSNPFKRGVCTRVYTTTPKKPNSALRKVARIRLTNQLEVTAYIPGEGHNLQEHSIVLVRGGRVKDLPGVRYHIVRGTLDASGVNGRNQSRSKYGTKRPKPGQAAAGGKKK.

At D89 the chain carries 3-methylthioaspartic acid. A disordered region spans residues 101-134 (TLDASGVNGRNQSRSKYGTKRPKPGQAAAGGKKK). Residues 125 to 134 (GQAAAGGKKK) show a composition bias toward low complexity.

Belongs to the universal ribosomal protein uS12 family. In terms of assembly, part of the 30S ribosomal subunit. Contacts proteins S8 and S17. May interact with IF1 in the 30S initiation complex.

With S4 and S5 plays an important role in translational accuracy. In terms of biological role, interacts with and stabilizes bases of the 16S rRNA that are involved in tRNA selection in the A site and with the mRNA backbone. Located at the interface of the 30S and 50S subunits, it traverses the body of the 30S subunit contacting proteins on the other side and probably holding the rRNA structure together. The combined cluster of proteins S8, S12 and S17 appears to hold together the shoulder and platform of the 30S subunit. The sequence is that of Small ribosomal subunit protein uS12 from Gemmatimonas aurantiaca (strain DSM 14586 / JCM 11422 / NBRC 100505 / T-27).